The following is an 83-amino-acid chain: Beta/kappa-theraphotoxin-Cg2a (83 aa).

Positions 1-21 (MKASVFAVILGLVVLCACSFA) are cleaved as a signal peptide. Residues 22–53 (EDEQDQFVSPNELLKSMFVESRHEFTPEVEGR) constitute a propeptide that is removed on maturation. 3 cysteine pairs are disulfide-bonded: Cys55/Cys69, Cys62/Cys74, and Cys68/Cys78. Ile82 carries the post-translational modification Isoleucine amide.

Belongs to the neurotoxin 30 (phrixotoxin) family. Expressed by the venom gland.

It is found in the secreted. In terms of biological role, this gating-modifier toxin shows an important inhibitory activity on sodium channels. It is very active on Nav1.7/SCN9A (IC(50)~0.6 nM), and also shows activity on Nav1.3/SCN3A (IC(50)=292 nM), Nav1.4/SCN4A (IC(50)=2.2-159 nM), and Nav1.5/SCN5A (IC(50)=2.3-2.9 uM). It has also been shown to inhibit tetrodotoxin (TTX)-resistant (IC(50)=27.6 nM) and TTX-sensitive (IC(50)=30.2 nM) sodium channels in rat dorsal root ganglion neurons. Lower inhibitory activity has also been shown on potassium channels: Kv4.2/KCND2 (IC(50)=604.2 nM), Kv4.3/KCND3 (IC(50)=425.1 nM), and Kv2.1/KCNB1 (IC(50)=14.3 uM). It binds to phospholipid membranes. Like its analog AM-8145, it may act by interacting only with the second voltage-sensor domain of Nav1.7/SCN9A. The sequence is that of Beta/kappa-theraphotoxin-Cg2a from Chilobrachys guangxiensis (Chinese earth tiger tarantula).